The chain runs to 273 residues: Putative pyruvate, phosphate dikinase regulatory protein (273 aa).

153-160 is an ADP binding site; it reads GISRTSKT.

Belongs to the pyruvate, phosphate/water dikinase regulatory protein family. PDRP subfamily.

The enzyme catalyses N(tele)-phospho-L-histidyl/L-threonyl-[pyruvate, phosphate dikinase] + ADP = N(tele)-phospho-L-histidyl/O-phospho-L-threonyl-[pyruvate, phosphate dikinase] + AMP + H(+). It carries out the reaction N(tele)-phospho-L-histidyl/O-phospho-L-threonyl-[pyruvate, phosphate dikinase] + phosphate + H(+) = N(tele)-phospho-L-histidyl/L-threonyl-[pyruvate, phosphate dikinase] + diphosphate. Its function is as follows. Bifunctional serine/threonine kinase and phosphorylase involved in the regulation of the pyruvate, phosphate dikinase (PPDK) by catalyzing its phosphorylation/dephosphorylation. This chain is Putative pyruvate, phosphate dikinase regulatory protein, found in Rhizobium johnstonii (strain DSM 114642 / LMG 32736 / 3841) (Rhizobium leguminosarum bv. viciae).